A 3564-amino-acid polypeptide reads, in one-letter code: MTAWRKFKSLLLPLVLAVLCAGLLTAAKGQNCGGLVQGPNGTIESPGFPHGYPNYANCTWIIITGERNRIQLSFHTFALEEDFDILSVYDGQPQQGNLKVRLSGFQLPSSIVSTGSLLTLWFTTDFAVSAQGFKAMYEVLPSHTCGNPGEILKGVLHGTRFNIGDKIRYSCLSGYILEGHAILTCIVSPGNGASWDFPAPFCRAEGACGGTLRGTSGSISSPHFPSEYDNNADCTWTILAEPGDTIALVFTDFQLEEGYDFLEISGTEAPSIWLTGMNLPSPVISSKNWLRLHFTSDSNHRRKGFNAQFQVKKAIELKSRGVKMLPSKDSSHKNSVLTQGGVSLISDMCPDPGIPDNGRRAGSDFRVGANVQFSCEDNYVLQGAKGITCQRVTETLAAWNDHRPICRARTCGSNLRGPSGVITSPNYPVQYEDNAHCVWVITTTDPDKVIKLAFEEFELERGYDTLTVGDAGKVGDTRSVLYVLTGSSVPDLIVSMSNQMWLHLQSDDSIGSPGFKAVYQEIEKGGCGDPGIPAYGKRTGSSFLHGDTLTFECQAAFELVGERVITCQKNNQWSGNKPSCVFSCFFNFTAPSGIILSPNYPEEYGNNMNCVWLIISEPGSRIHLIFNDFDVEPQFDFLAVKDDGISDITVLGTFSGNEVPAQLASSGHIVRLEFQSDHSTTGRGFNITYTTFGQNECHDPGIPVNGRRFGDRFLLGSSVSFHCDDGFVKTQGSESITCILQDGNVVWSSTVPRCEAPCGGHLTASSGVILPPGWPGYYKDSLNCEWVIEAKPGHSIKITFDRFQTEVNYDTLEVRDGPTSSSPLIGEYHGTQAPQFLISTGNYMYLLFTTDSSRASVGFLIHYESVTLESDSCLDPGIPVNGQRHGSNFGIRSTVTFSCDPGYTLSDDEPLVCEKNHQWNHALPSCDALCGGYIHGKSGTVLSPGFPDFYPNSLNCTWTIEVSHGKGVQMNFHTFHLESSHDYLLITEDGSFSEPVARLTGSVLPHTIKAGLFGNFTAQLRFISDFSISYEGFNITFAEYDLEPCDDPGVPAFSRRIGFQFGVGDTLAFTCFQGYRLEGATKLTCLGGGRRVWSAPLPRCVAECGASVKGNEGTLLSPNFPSHYDNNHECIYKIETEAGKGIHLRARTFQLFEGDTLKVYDGKDSSSRSLGVFTRSEFMGLVLNSTSNHLRLEFNTNGSDTAQGFQLTYTSFDLVKCEDPGIPNYGYRIRDDGHFTDTVVLYSCNPGYAMHGSSTLTCLSGDRRVWDKPMPSCVAECGGLVHAATSGRILSPGYPAPYDNNLHCTWTIEADPGKTISLHFIVFDTETAHDILKVWDGPVDSNILLKEWSGSALPEDIHSTFNSLTLQFDSDFFISKSGFSIQFSTSIASTCNDPGMPQNGTRYGDSREPGDTITFQCDPGYQLQGPAKITCVQLNNRFFWQPDPPSCIAACGGNLTGPAGVILSPNYPQPYPPGKECDWRIKVNPDFVIALIFKSFSMEPSYDFLHIYEGEDSNSPLIGSFQGSQAPERIESSGNSLFLAFRSDASVGLSGFAIEFKEKPREACFDPGNIMNGTRIGTDFKLGSTVTYQCDSGYKIVDPSSIECVTGADGKPSWDRALPACQAPCGGQYTGSEGVVLSPNYPHNYTAGQMCIYSITVPKEFVVFGQFAYFQTALNDLAELFDGTHPQARLLSSLSGSHSGETLPLATSNQILLRFSAKSGASARGFHFVYQAVPRTSDTQCSSVPEPRYGRRIGSEFSAGSIVRFECNPGYLLQGSTAIRCQSVPNALAQWNDTIPSCVVPCSGNFTQRRGTILSPGYPEPYGNNLNCVWKIIVSEGSGIQIQVISFATEQNWDSLEIHDGGDMTAPRLGSFSGTTVPALLNSTSNQLCLHFQSDISVAAAGFHLEYKTVGLAACQEPALPSNGIKIGDRYMVNDVLSFQCEPGYTLQGRSHISCMPGTVRRWNYPSPLCIATCGGTLTSMSGVILSPGFPGSYPNNLDCTWKISLPIGYGAHIQFLNFSTEANHDYLEIQNGPYHSSPMMGQFSGPDLPTSLLSTTHETLIRFYSDHSQNRQGFKLSYQAYELQNCPDPPAFQNGFMINSDYSVGQSISFECYPGYILLGHPVLTCQHGTDRNWNYPFPRCDAPCGYNVTSQNGTIYSPGFPDEYPILKDCLWLVTVPPGHGVYINFTLLQTEAVNDYIAVWDGPDQNSPQLGVFSGNTALETAYSSTNQVLLKFHSDFSNGGFFVLNFHAFQLKRCPPPPAVPQADLLTEDEDFEIGDFVKYQCHPGYTLLGSDTLTCKLSSQLLFQGSPPTCEAQCPANEVRTESSGVILSPGYPGNYFNSQTCAWSIKVEPNFNITLFVDTFQSEKQFDALEVFDGSSGQSPLLVVLSGNHTEQSNFTSRSNHLYLRWSTDHATSKKGFKIRYAAPYCSLTSTLRNGGILNKTAGAVGSKVHYFCKPGYRMIGHSNATCRRNPVGVYQWDSMAPLCQAVSCGIPEAPGNGSFTGNEFTLDSKVTYECNEGFKLDASQEATTVCQEDGLWSNRGKPPTCKPVPCPSIEGQLSEHVLWRLVSGSLNEYGAQVLLSCSPGYFLQGQRLLQCQANGTWSTEEDRPRCKVISCGSLSFPPNGNKIGTLTIYGATAIFTCNTGYTLVGSHVRECLANGLWSGSETRCLAGHCGSPDPIVNGHISGDGFSYRDTVVYQCNPGFRLVGTSVRICLQDHKWSGQTPVCVPITCGHPGNPAHGLTNGTEFNLNDLVNFTCHTGYRLQGASRAQCRSNGQWSSPLPICRVVNCSDPGSVENAVRHGQQNFPESFEYGTSVMYHCKTGFYLLGSSALTCMASGLWDRSLPKCLAISCGHPGVPANAVLTGELFTYGATVQYSCKGGQILTGNSTRVCQEDSHWSGSLPHCSGNSPGFCGDPGTPAHGSRLGDEFKTKSLLRFSCEMGHQLRGSAERTCLVNGSWSGVQPVCEAVSCGNPGTPTNGMILSSDGILFSSSVIYACWEGYKTSGLMTRHCTANGTWTGTAPDCTIISCGDPGTLPNGIQFGTDFTFNKTVSYQCNPGYLMEPPTSPTIRCTKDGTWNQSRPLCKAVLCNQPPPVPNGKVEGSDFRWGASISYSCVDGYQLSHSAILSCEGRGVWKGEVPQCLPVFCGDPGTPAEGRLSGKSFTFKSEVFIQCKPPFVLVGSSRRTCQADGIWSGIQPTCIDPAHTACPDPGTPHFGIQNSSKGYEVGSTVFFRCRKGYHIQGSTTRTCLANLTWSGIQTECIPHACRQPETPAHADVRAIDLPAFGYTLVYTCHPGFFLAGGSEHRTCKADMKWTGKSPVCKSKGVREVNETVTKTPVPSDVFFINSVWKGYYEYLGKRQPATLTVDWFNATSSKVNATFTAASRVQLELTGVYKKEEAHLLLKAFHIKGPADIFVSKFENDNWGLDGYVSSGLERGGFSFQGDIHGKDFGKFKLERQDPSNSDADSSNHYQGTSSGSVAAAILVPFFALILSGFAFYLYKHRTRPKVQYNGYAGHENSNGQASFENPMYDTNLKPTEAKAVRFDTTLNTVCTVV.

The signal sequence occupies residues 1–29; sequence MTAWRKFKSLLLPLVLAVLCAGLLTAAKG. The Extracellular segment spans residues 30–3487; that stretch reads QNCGGLVQGP…NHYQGTSSGS (3458 aa). 10 disulfide bridges follow: C32–C58, C145–C185, C171–C202, C208–C234, C349–C389, C375–C406, C411–C437, C527–C567, C553–C580, and C584–C610. A CUB 1 domain is found at 32–140; sequence CGGLVQGPNG…QGFKAMYEVL (109 aa). N-linked (GlcNAc...) asparagine glycosylation is found at N40 and N57. The Sushi 1 domain occupies 143–204; sequence HTCGNPGEIL…WDFPAPFCRA (62 aa). The 105-residue stretch at 208-312 folds into the CUB 2 domain; it reads CGGTLRGTSG…KGFNAQFQVK (105 aa). The 62-residue stretch at 347–408 folds into the Sushi 2 domain; that stretch reads DMCPDPGIPD…WNDHRPICRA (62 aa). A CUB 3 domain is found at 411 to 522; that stretch reads CGSNLRGPSG…PGFKAVYQEI (112 aa). Residues 525–582 enclose the Sushi 3 domain; it reads GGCGDPGIPAYGKRTGSSFLHGDTLTFECQAAFELVGERVITCQKNNQWSGNKPSCVF. The CUB 4 domain maps to 584–692; sequence CFFNFTAPSG…RGFNITYTTF (109 aa). N-linked (GlcNAc...) asparagine glycans are attached at residues N587 and N686. One can recognise a Sushi 4 domain in the interval 695–756; sequence NECHDPGIPV…WSSTVPRCEA (62 aa). 6 disulfides stabilise this stretch: C697–C738, C723–C754, C758–C784, C873–C913, C899–C926, and C930–C956. Residues 758–866 form the CUB 5 domain; it reads CGGHLTASSG…VGFLIHYESV (109 aa). The Sushi 5 domain occupies 871–928; that stretch reads DSCLDPGIPVNGQRHGSNFGIRSTVTFSCDPGYTLSDDEPLVCEKNHQWNHALPSCDA. A CUB 6 domain is found at 930–1040; that stretch reads CGGYIHGKSG…EGFNITFAEY (111 aa). Residues N955, N1015, and N1034 are each glycosylated (N-linked (GlcNAc...) asparagine). The region spanning 1043-1102 is the Sushi 6 domain; that stretch reads EPCDDPGVPAFSRRIGFQFGVGDTLAFTCFQGYRLEGATKLTCLGGGRRVWSAPLPRCVA. 3 cysteine pairs are disulfide-bonded: C1045–C1085, C1071–C1100, and C1104–C1130. The CUB 7 domain maps to 1104–1212; sequence CGASVKGNEG…QGFQLTYTSF (109 aa). N-linked (GlcNAc...) asparagine glycans are attached at residues N1184 and N1197. Residues 1215 to 1275 form the Sushi 7 domain; it reads VKCEDPGIPN…WDKPMPSCVA (61 aa). Disulfide bonds link C1217–C1258, C1244–C1273, C1277–C1304, C1391–C1431, C1417–C1447, C1451–C1477, C1564–C1604, C1590–C1621, C1625–C1651, C1741–C1781, C1767–C1798, and C1802–C1828. In terms of domain architecture, CUB 8 spans 1277–1386; sequence CGGLVHAATS…SGFSIQFSTS (110 aa). The Sushi 8 domain occupies 1389-1449; the sequence is STCNDPGMPQ…WQPDPPSCIA (61 aa). N1399 is a glycosylation site (N-linked (GlcNAc...) asparagine). The region spanning 1451–1559 is the CUB 9 domain; the sequence is CGGNLTGPAG…SGFAIEFKEK (109 aa). Residues N1454 and N1572 are each glycosylated (N-linked (GlcNAc...) asparagine). In terms of domain architecture, Sushi 9 spans 1562 to 1623; it reads EACFDPGNIM…WDRALPACQA (62 aa). Residues 1625-1733 enclose the CUB 10 domain; sequence CGGQYTGSEG…RGFHFVYQAV (109 aa). An N-linked (GlcNAc...) asparagine glycan is attached at N1644. A Sushi 10 domain is found at 1739-1800; that stretch reads TQCSSVPEPR…WNDTIPSCVV (62 aa). Residues N1792, N1805, and N1882 are each glycosylated (N-linked (GlcNAc...) asparagine). A CUB 11 domain is found at 1802 to 1910; sequence CSGNFTQRRG…AGFHLEYKTV (109 aa). Residues 1913 to 1972 enclose the Sushi 11 domain; the sequence is AACQEPALPSNGIKIGDRYMVNDVLSFQCEPGYTLQGRSHISCMPGTVRRWNYPSPLCIA. Intrachain disulfides connect C1915–C1955, C1941–C1970, and C1974–C2000. Residues 1974–2082 enclose the CUB 12 domain; that stretch reads CGGTLTSMSG…QGFKLSYQAY (109 aa). N2018 is a glycosylation site (N-linked (GlcNAc...) asparagine). The Sushi 12 domain occupies 2085-2144; the sequence is QNCPDPPAFQNGFMINSDYSVGQSISFECYPGYILLGHPVLTCQHGTDRNWNYPFPRCDA. Cystine bridges form between C2087/C2127, C2113/C2142, and C2146/C2172. A CUB 13 domain is found at 2146–2257; the sequence is CGYNVTSQNG…LNFHAFQLKR (112 aa). Residues N2149, N2154, and N2187 are each glycosylated (N-linked (GlcNAc...) asparagine). Positions 2256-2317 constitute a Sushi 13 domain; that stretch reads KRCPPPPAVP…FQGSPPTCEA (62 aa). 3 disulfide bridges follow: C2258/C2300, C2286/C2315, and C2319/C2347. The CUB 14 domain occupies 2319-2430; it reads CPANEVRTES…KGFKIRYAAP (112 aa). N-linked (GlcNAc...) asparagine glycosylation is found at N2358, N2394, N2400, N2445, N2470, and N2503. 15 Sushi domains span residues 2430–2492, 2493–2554, 2555–2619, 2620–2677, 2678–2735, 2736–2793, 2794–2856, 2857–2914, 2918–2975, 2976–3034, 3035–3094, 3095–3152, 3153–3210, 3214–3272, and 3273–3332; these read PYCS…LCQA, VSCG…TCKP, VPCP…RCKV, ISCG…RCLA, GHCG…VCVP, ITCG…ICRV, VNCS…KCLA, ISCG…HCSG, GFCG…VCEA, VSCG…DCTI, ISCG…LCKA, VLCN…QCLP, VFCG…TCID, TACP…ECIP, and HACR…VCKS. Cystine bridges form between C2432–C2473, C2459–C2490, C2495–C2537, C2521–C2552, C2557–C2602, C2588–C2617, C2622–C2662, C2648–C2675, C2680–C2720, C2706–C2733, C2738–C2778, and C2764–C2791. A glycan (N-linked (GlcNAc...) asparagine) is linked at N2605. 2 N-linked (GlcNAc...) asparagine glycosylation sites follow: N2750 and N2761. N-linked (GlcNAc...) asparagine glycosylation occurs at N2795. 18 disulfide bridges follow: C2796–C2841, C2827–C2854, C2859–C2899, C2885–C2912, C2920–C2960, C2946–C2973, C2978–C3019, C3005–C3032, C3037–C3079, C3063–C3092, C3097–C3137, C3123–C3150, C3155–C3195, C3181–C3208, C3216–C3257, C3243–C3270, C3275–C3317, and C3302–C3330. N-linked (GlcNAc...) asparagine glycosylation occurs at N2894. An N-linked (GlcNAc...) asparagine glycan is attached at N2963. N-linked (GlcNAc...) asparagine glycosylation is found at N3022, N3056, and N3086. N-linked (GlcNAc...) asparagine glycans are attached at residues N3228 and N3260. N3339, N3379, and N3386 each carry an N-linked (GlcNAc...) asparagine glycan. Residues 3488–3508 traverse the membrane as a helical segment; the sequence is VAAAILVPFFALILSGFAFYL. At 3509-3564 the chain is on the cytoplasmic side; it reads YKHRTRPKVQYNGYAGHENSNGQASFENPMYDTNLKPTEAKAVRFDTTLNTVCTVV.

This sequence belongs to the CSMD family.

It localises to the membrane. The polypeptide is CUB and sushi domain-containing protein 1 (Csmd1) (Mus musculus (Mouse)).